Here is a 497-residue protein sequence, read N- to C-terminus: Glucose-6-phosphate 1-dehydrogenase (497 aa).

Residues 17 to 24, arginine 51, and lysine 151 each bind NADP(+); that span reads GASGDLAK. Residues lysine 151, 181-185, glutamate 219, and aspartate 238 each bind D-glucose 6-phosphate; that span reads HYLGK. Histidine 243 acts as the Proton acceptor in catalysis. Lysine 334 provides a ligand contact to NADP(+). D-glucose 6-phosphate contacts are provided by lysine 337 and arginine 342. NADP(+)-binding residues include lysine 343, arginine 347, and arginine 371. Residue glutamine 373 coordinates D-glucose 6-phosphate. NADP(+) is bound by residues 379–381, 399–401, arginine 465, and tryptophan 487; these read YLK and DLS.

This sequence belongs to the glucose-6-phosphate dehydrogenase family.

The protein localises to the cytoplasm. The protein resides in the cytosol. The catalysed reaction is D-glucose 6-phosphate + NADP(+) = 6-phospho-D-glucono-1,5-lactone + NADPH + H(+). It participates in carbohydrate degradation; pentose phosphate pathway; D-ribulose 5-phosphate from D-glucose 6-phosphate (oxidative stage): step 1/3. Functionally, cytosolic glucose-6-phosphate dehydrogenase that catalyzes the first and rate-limiting step of the oxidative branch within the pentose phosphate pathway/shunt, an alternative route to glycolysis for the dissimilation of carbohydrates and a major source of reducing power and metabolic intermediates for fatty acid and nucleic acid biosynthetic processes. The protein is Glucose-6-phosphate 1-dehydrogenase (g6pd-1) of Dictyostelium discoideum (Social amoeba).